Here is a 405-residue protein sequence, read N- to C-terminus: Acetylornithine aminotransferase (405 aa).

Pyridoxal 5'-phosphate contacts are provided by residues 107–108 and phenylalanine 140; that span reads GA. Arginine 143 lines the N(2)-acetyl-L-ornithine pocket. Residue 225–228 coordinates pyridoxal 5'-phosphate; the sequence is DEVQ. Lysine 254 carries the post-translational modification N6-(pyridoxal phosphate)lysine. Residue serine 282 coordinates N(2)-acetyl-L-ornithine. Threonine 283 contributes to the pyridoxal 5'-phosphate binding site.

It belongs to the class-III pyridoxal-phosphate-dependent aminotransferase family. ArgD subfamily. Homodimer. Pyridoxal 5'-phosphate serves as cofactor.

The protein resides in the cytoplasm. It carries out the reaction N(2)-acetyl-L-ornithine + 2-oxoglutarate = N-acetyl-L-glutamate 5-semialdehyde + L-glutamate. It participates in amino-acid biosynthesis; L-arginine biosynthesis; N(2)-acetyl-L-ornithine from L-glutamate: step 4/4. The chain is Acetylornithine aminotransferase from Shewanella oneidensis (strain ATCC 700550 / JCM 31522 / CIP 106686 / LMG 19005 / NCIMB 14063 / MR-1).